Consider the following 88-residue polypeptide: Apolipoprotein C-I (88 aa).

An N-terminal signal peptide occupies residues 1–26; the sequence is MRLFLSLPVLVVVLAMVLEGPAPAQA.

The protein belongs to the apolipoprotein C1 family.

The protein resides in the secreted. In terms of biological role, inhibitor of lipoprotein binding to the low density lipoprotein (LDL) receptor, LDL receptor-related protein, and very low density lipoprotein (VLDL) receptor. Associates with high density lipoproteins (HDL) and the triacylglycerol-rich lipoproteins in the plasma and makes up about 10% of the protein of the VLDL and 2% of that of HDL. Appears to interfere directly with fatty acid uptake and is also the major plasma inhibitor of cholesteryl ester transfer protein (CETP). Binds free fatty acids and reduces their intracellular esterification. Modulates the interaction of APOE with beta-migrating VLDL and inhibits binding of beta-VLDL to the LDL receptor-related protein. This Arctocephalus gazella (Antarctic fur seal) protein is Apolipoprotein C-I (APOC1).